The sequence spans 396 residues: Acetate kinase (396 aa).

Residue Asn-7 participates in Mg(2+) binding. Lys-14 is a binding site for ATP. Substrate is bound at residue Arg-91. The Proton donor/acceptor role is filled by Asp-148. Residues His-208 to Gly-212, Asp-283 to Arg-285, and Gly-331 to Asn-335 contribute to the ATP site. Glu-384 lines the Mg(2+) pocket.

Belongs to the acetokinase family. Homodimer. Requires Mg(2+) as cofactor. Mn(2+) serves as cofactor.

It localises to the cytoplasm. The enzyme catalyses acetate + ATP = acetyl phosphate + ADP. Its pathway is metabolic intermediate biosynthesis; acetyl-CoA biosynthesis; acetyl-CoA from acetate: step 1/2. Functionally, catalyzes the formation of acetyl phosphate from acetate and ATP. Can also catalyze the reverse reaction. This chain is Acetate kinase, found in Desulforamulus reducens (strain ATCC BAA-1160 / DSM 100696 / MI-1) (Desulfotomaculum reducens).